The primary structure comprises 175 residues: NADH-quinone oxidoreductase subunit I 2 (175 aa).

2 consecutive 4Fe-4S ferredoxin-type domains span residues 50–82 (HVLQRDENGLEKCVACFLCAAACPSNCIYIEAA) and 98–127 (KVYNIDYNRCIFCGYCVEACPTDAITHGHG). [4Fe-4S] cluster contacts are provided by Cys62, Cys65, Cys68, Cys72, Cys107, Cys110, Cys113, and Cys117.

It belongs to the complex I 23 kDa subunit family. In terms of assembly, NDH-1 is composed of 14 different subunits. Subunits NuoA, H, J, K, L, M, N constitute the membrane sector of the complex. The cofactor is [4Fe-4S] cluster.

The protein resides in the cell inner membrane. It carries out the reaction a quinone + NADH + 5 H(+)(in) = a quinol + NAD(+) + 4 H(+)(out). NDH-1 shuttles electrons from NADH, via FMN and iron-sulfur (Fe-S) centers, to quinones in the respiratory chain. The immediate electron acceptor for the enzyme in this species is believed to be ubiquinone. Couples the redox reaction to proton translocation (for every two electrons transferred, four hydrogen ions are translocated across the cytoplasmic membrane), and thus conserves the redox energy in a proton gradient. In Koribacter versatilis (strain Ellin345), this protein is NADH-quinone oxidoreductase subunit I 2.